The sequence spans 148 residues: MDRALSTFPGDDDETNERNINHREKTSGEHGHYEDKLLDLSEEEPNMIKIKNDIKKIINERYSNYISIDDDEISDILKDSFISNEEMQIKDFVLRLLVLEKLFQTSVKECNSLKNIIKRLENHIETIRKNMIVLTKKVDFQTGRSTTL.

A disordered region spans residues 1–34 (MDRALSTFPGDDDETNERNINHREKTSGEHGHYE). The span at 16–34 (NERNINHREKTSGEHGHYE) shows a compositional bias: basic and acidic residues.

This sequence belongs to the poxviruses fusion protein family. As to quaternary structure, homotrimer, covalently linked.

It is found in the virion membrane. The sequence is that of Putative fusion protein from Sheeppox virus (strain KS-1) (SPPV).